The chain runs to 94 residues: Integration host factor subunit beta (94 aa).

It belongs to the bacterial histone-like protein family. In terms of assembly, heterodimer of an alpha and a beta chain.

Functionally, this protein is one of the two subunits of integration host factor, a specific DNA-binding protein that functions in genetic recombination as well as in transcriptional and translational control. In Escherichia coli O127:H6 (strain E2348/69 / EPEC), this protein is Integration host factor subunit beta.